The chain runs to 240 residues: 2,3,4,5-tetrahydropyridine-2,6-dicarboxylate N-acetyltransferase (240 aa).

Belongs to the transferase hexapeptide repeat family. DapH subfamily.

It carries out the reaction (S)-2,3,4,5-tetrahydrodipicolinate + acetyl-CoA + H2O = L-2-acetamido-6-oxoheptanedioate + CoA. Its pathway is amino-acid biosynthesis; L-lysine biosynthesis via DAP pathway; LL-2,6-diaminopimelate from (S)-tetrahydrodipicolinate (acetylase route): step 1/3. In terms of biological role, catalyzes the transfer of an acetyl group from acetyl-CoA to tetrahydrodipicolinate. The protein is 2,3,4,5-tetrahydropyridine-2,6-dicarboxylate N-acetyltransferase of Bacillus thuringiensis (strain Al Hakam).